A 124-amino-acid polypeptide reads, in one-letter code: Large ribosomal subunit protein mL52 (124 aa).

The N-terminal 23 residues, 1 to 23 (MAALGMLLSTGVRRLHCGSAARA), are a transit peptide targeting the mitochondrion. The interval 99–124 (LQEEKRKQQNALKPKGVLLQNPGPSQ) is disordered.

The protein belongs to the mitochondrion-specific ribosomal protein mL52 family. In terms of assembly, component of the mitochondrial ribosome large subunit (39S) which comprises a 16S rRNA and about 50 distinct proteins.

It localises to the mitochondrion. The chain is Large ribosomal subunit protein mL52 (MRPL52) from Bos taurus (Bovine).